A 529-amino-acid polypeptide reads, in one-letter code: Phosphoenolpyruvate carboxykinase (ATP) (529 aa).

The substrate site is built by Arg-60, Tyr-195, and Lys-201. ATP-binding positions include Lys-201, His-220, and 236 to 244 (GLSGTGKTT). Mn(2+)-binding residues include Lys-201 and His-220. Asp-257 serves as a coordination point for Mn(2+). Glu-285, Arg-323, and Ser-448 together coordinate ATP. Arg-323 contributes to the substrate binding site.

The protein belongs to the phosphoenolpyruvate carboxykinase (ATP) family. It depends on Mn(2+) as a cofactor.

It localises to the cytoplasm. The enzyme catalyses oxaloacetate + ATP = phosphoenolpyruvate + ADP + CO2. The protein operates within carbohydrate biosynthesis; gluconeogenesis. In terms of biological role, involved in the gluconeogenesis. Catalyzes the conversion of oxaloacetate (OAA) to phosphoenolpyruvate (PEP) through direct phosphoryl transfer between the nucleoside triphosphate and OAA. The polypeptide is Phosphoenolpyruvate carboxykinase (ATP) (Geobacter sp. (strain M21)).